The primary structure comprises 915 residues: Probable LRR receptor-like serine/threonine-protein kinase At2g16250 (915 aa).

Positions 1–28 (MVDQRRSALGFVLLLLCLVLFFDCVVVG) are cleaved as a signal peptide. Over 29-451 (QTQSRFSEKL…ISRRTVIILA (423 aa)) the chain is Extracellular. N-linked (GlcNAc...) asparagine glycosylation is found at Asn71, Asn78, Asn101, Asn109, Asn150, Asn158, and Asn177. 11 LRR repeats span residues 102–125 (LTRLSYFNASGLALPGTIPEWFGV), 127–150 (LLALEVLDLSSCSVNGVVPFTLGN), 151–174 (LTSLRTLNLSQNSLTSLVPSSLGQ), 176–198 (LNLSQLDLSRNSFTGVLPQSFSS), 199–223 (LKNLLTLDVSSNYLTGPIPPGLGAL), 225–247 (KLIHLNFSSNSFSSPIPSELGDL), 248–271 (VNLVDFDLSINSLSGSVPQELRKL), 272–295 (SKLQLMAIGDNLLSGTLPVDLFSA), 297–320 (SQLQTLVLRENGFSGSLPDVCWSL), 321–344 (PKLRILDIAKNNFTGLLPYSSYDS), and 366–390 (LRRFRIMDLSGNYFEGKLPDYVTGE). N-linked (GlcNAc...) asparagine glycosylation occurs at Asn230. N-linked (GlcNAc...) asparagine glycosylation is present at Asn332. 3 N-linked (GlcNAc...) asparagine glycosylation sites follow: Asn391, Asn429, and Asn437. A helical membrane pass occupies residues 452 to 472 (AVGGGVAFILLFVILPIILVL). Residues 473–915 (CMRHRRRAAQ…AAYGVVEDNL (443 aa)) lie on the Cytoplasmic side of the membrane. A disordered region spans residues 482 to 503 (QRGNNDRPKPAGEASQQPPKGA). The Protein kinase domain maps to 527-811 (FNDANLIKRG…IVNALENPLK (285 aa)). Residues 533–541 (IKRGHSGNL) and Lys555 contribute to the ATP site. Asp657 serves as the catalytic Proton acceptor. A disordered region spans residues 851–915 (TAVQAGATTS…AAYGVVEDNL (65 aa)). Gly residues predominate over residues 859 to 870 (TSGGGGGGGGNG). Residues 871-892 (LRNSGSQGSSGRNNNNNGNSSS) show a composition bias toward low complexity.

This sequence belongs to the protein kinase superfamily. Ser/Thr protein kinase family.

Its subcellular location is the membrane. The catalysed reaction is L-seryl-[protein] + ATP = O-phospho-L-seryl-[protein] + ADP + H(+). It catalyses the reaction L-threonyl-[protein] + ATP = O-phospho-L-threonyl-[protein] + ADP + H(+). The polypeptide is Probable LRR receptor-like serine/threonine-protein kinase At2g16250 (Arabidopsis thaliana (Mouse-ear cress)).